Here is a 388-residue protein sequence, read N- to C-terminus: Alanine racemase, catabolic (388 aa).

Lysine 46 (proton acceptor; specific for D-alanine) is an active-site residue. Lysine 46 bears the N6-(pyridoxal phosphate)lysine mark. Residue arginine 145 coordinates substrate. Residue tyrosine 267 is the Proton acceptor; specific for L-alanine of the active site. Methionine 315 contributes to the substrate binding site.

It belongs to the alanine racemase family. The cofactor is pyridoxal 5'-phosphate.

The catalysed reaction is L-alanine = D-alanine. In terms of biological role, isomerizes L-alanine to D-alanine which is then oxidized to pyruvate by DadA. The chain is Alanine racemase, catabolic (dadB) from Agrobacterium fabrum (strain C58 / ATCC 33970) (Agrobacterium tumefaciens (strain C58)).